Consider the following 101-residue polypeptide: NAD(P)H-quinone oxidoreductase subunit 4L, chloroplastic (101 aa).

3 helical membrane-spanning segments follow: residues 2–22, 32–52, and 61–81; these read ILEHVLVLSAYLFSIGIYGLI, MCLELILNAVNINFVTFSDFF, and IFSIFVIAIAAAEAAIGPAIL.

This sequence belongs to the complex I subunit 4L family. In terms of assembly, NDH is composed of at least 16 different subunits, 5 of which are encoded in the nucleus.

It localises to the plastid. It is found in the chloroplast thylakoid membrane. It catalyses the reaction a plastoquinone + NADH + (n+1) H(+)(in) = a plastoquinol + NAD(+) + n H(+)(out). The catalysed reaction is a plastoquinone + NADPH + (n+1) H(+)(in) = a plastoquinol + NADP(+) + n H(+)(out). Its function is as follows. NDH shuttles electrons from NAD(P)H:plastoquinone, via FMN and iron-sulfur (Fe-S) centers, to quinones in the photosynthetic chain and possibly in a chloroplast respiratory chain. The immediate electron acceptor for the enzyme in this species is believed to be plastoquinone. Couples the redox reaction to proton translocation, and thus conserves the redox energy in a proton gradient. This is NAD(P)H-quinone oxidoreductase subunit 4L, chloroplastic from Platanus occidentalis (Sycamore).